The following is a 264-amino-acid chain: S-adenosylmethionine decarboxylase proenzyme (264 aa).

Catalysis depends on serine 113, which acts as the Schiff-base intermediate with substrate; via pyruvic acid. Serine 113 is modified (pyruvic acid (Ser); by autocatalysis). The active-site Proton acceptor; for processing activity is the histidine 118. Catalysis depends on cysteine 141, which acts as the Proton donor; for catalytic activity.

The protein belongs to the prokaryotic AdoMetDC family. Type 2 subfamily. Heterooctamer of four alpha and four beta chains arranged as a tetramer of alpha/beta heterodimers. Pyruvate is required as a cofactor. In terms of processing, is synthesized initially as an inactive proenzyme. Formation of the active enzyme involves a self-maturation process in which the active site pyruvoyl group is generated from an internal serine residue via an autocatalytic post-translational modification. Two non-identical subunits are generated from the proenzyme in this reaction, and the pyruvate is formed at the N-terminus of the alpha chain, which is derived from the carboxyl end of the proenzyme. The post-translation cleavage follows an unusual pathway, termed non-hydrolytic serinolysis, in which the side chain hydroxyl group of the serine supplies its oxygen atom to form the C-terminus of the beta chain, while the remainder of the serine residue undergoes an oxidative deamination to produce ammonia and the pyruvoyl group blocking the N-terminus of the alpha chain.

The enzyme catalyses S-adenosyl-L-methionine + H(+) = S-adenosyl 3-(methylsulfanyl)propylamine + CO2. It participates in amine and polyamine biosynthesis; S-adenosylmethioninamine biosynthesis; S-adenosylmethioninamine from S-adenosyl-L-methionine: step 1/1. Its function is as follows. Catalyzes the decarboxylation of S-adenosylmethionine to S-adenosylmethioninamine (dcAdoMet), the propylamine donor required for the synthesis of the polyamines spermine and spermidine from the diamine putrescine. This Pseudomonas aeruginosa (strain UCBPP-PA14) protein is S-adenosylmethionine decarboxylase proenzyme.